A 387-amino-acid chain; its full sequence is Migration and invasion-inhibitory protein (387 aa).

Residues 50–59 (NLEMPLSQET) show a composition bias toward polar residues. Disordered regions lie at residues 50–80 (NLEM…DPLD) and 133–172 (VSLG…SAVP). Positions 60-69 (SSASSVAPSS) are enriched in low complexity. Basic and acidic residues predominate over residues 70–80 (QDKRHMLDPLD). Position 307 is a phosphoserine (Ser307).

Interacts with IGFBP2.

Its function is as follows. Inhibits glioma cells invasion and down-regulates adhesion- and motility-associated genes such as NFKB2 and ICAM1. Exhibits opposing effects to IGFBP2 on cell invasion. In Mus musculus (Mouse), this protein is Migration and invasion-inhibitory protein (Miip).